Reading from the N-terminus, the 51-residue chain is Sperm protamine P1 (51 aa).

Intrachain disulfides connect cysteine 7/cysteine 15 and cysteine 40/cysteine 48.

Belongs to the protamine P1 family. Cross-linked by interchain disulfide bonds around the DNA-helix. As to expression, testis.

Its subcellular location is the nucleus. It localises to the chromosome. Functionally, protamines substitute for histones in the chromatin of sperm during the haploid phase of spermatogenesis. They compact sperm DNA into a highly condensed, stable and inactive complex. The protein is Sperm protamine P1 (PRM1) of Capra hircus (Goat).